A 415-amino-acid polypeptide reads, in one-letter code: MNVKDMLRQASDAAKQLITLSDQTIIGILKETAQVLRTHTEEVLAANRQDLERMDPANPKYDRLKLTEERLQGIAADMENVSTLPSPLNKVLSETIRPNGMVIRKVTVPFGVIGVIYEARPNVTFDVFSLCFRSGNACVLKGGSDADFSNRALVRIIHSVLERQGINPAVCTLLPPDREATAELLGAVGLVDLIIPRGSSSLIHFVREHAKVPVIETGAGICHTYFDRSGDKGKGREIVNNAKTRRVSVCNALDCLIIHRERLSDLPYICEKLPDSNVIIYADEPAYAALSEHYPETLLQQANENSFGTEFLDYKMSIRTVSSLDEVLSHIARYSSKHSESIISEDPETIRRFQQLVDAACVYANVSTAFTDGAQFGFGAEIGISTQKLHARGPMALPELTTYKYIIEGDGQTRI.

It belongs to the gamma-glutamyl phosphate reductase family.

The protein resides in the cytoplasm. The enzyme catalyses L-glutamate 5-semialdehyde + phosphate + NADP(+) = L-glutamyl 5-phosphate + NADPH + H(+). It participates in amino-acid biosynthesis; L-proline biosynthesis; L-glutamate 5-semialdehyde from L-glutamate: step 2/2. Functionally, catalyzes the NADPH-dependent reduction of L-glutamate 5-phosphate into L-glutamate 5-semialdehyde and phosphate. The product spontaneously undergoes cyclization to form 1-pyrroline-5-carboxylate. In Parabacteroides distasonis (strain ATCC 8503 / DSM 20701 / CIP 104284 / JCM 5825 / NCTC 11152), this protein is Gamma-glutamyl phosphate reductase.